A 406-amino-acid chain; its full sequence is 4-hydroxy-3-methylbut-2-en-1-yl diphosphate synthase (flavodoxin) (406 aa).

Cysteine 297, cysteine 300, cysteine 343, and glutamate 350 together coordinate [4Fe-4S] cluster.

The protein belongs to the IspG family. In terms of assembly, homodimer. It depends on [4Fe-4S] cluster as a cofactor.

The catalysed reaction is (2E)-4-hydroxy-3-methylbut-2-enyl diphosphate + oxidized [flavodoxin] + H2O + 2 H(+) = 2-C-methyl-D-erythritol 2,4-cyclic diphosphate + reduced [flavodoxin]. Its pathway is isoprenoid biosynthesis; isopentenyl diphosphate biosynthesis via DXP pathway; isopentenyl diphosphate from 1-deoxy-D-xylulose 5-phosphate: step 5/6. Converts 2C-methyl-D-erythritol 2,4-cyclodiphosphate (ME-2,4cPP) into 1-hydroxy-2-methyl-2-(E)-butenyl 4-diphosphate. The polypeptide is 4-hydroxy-3-methylbut-2-en-1-yl diphosphate synthase (flavodoxin) (Thermus thermophilus (strain ATCC BAA-163 / DSM 7039 / HB27)).